A 406-amino-acid chain; its full sequence is CinA-like protein (406 aa).

This sequence belongs to the CinA family.

The polypeptide is CinA-like protein (Deinococcus geothermalis (strain DSM 11300 / CIP 105573 / AG-3a)).